The primary structure comprises 307 residues: Oligopeptide transport ATP-binding protein OppF (307 aa).

In terms of domain architecture, ABC transporter spans valine 6–leucine 251. Residue glycine 42–threonine 49 coordinates ATP.

The protein belongs to the ABC transporter superfamily. As to quaternary structure, the complex is composed of two ATP-binding proteins (OppD and OppF), two transmembrane proteins (OppB and OppC) and a solute-binding protein (OppA).

Its subcellular location is the cell membrane. The enzyme catalyses a [peptide](out) + ATP + H2O = a [peptide](in) + ADP + phosphate + H(+). Its function is as follows. Part of the ABC transporter complex OppABCDF involved in the uptake of oligopeptides. Probably responsible for energy coupling to the transport system. This Streptococcus pyogenes serotype M1 protein is Oligopeptide transport ATP-binding protein OppF (oppF).